Consider the following 484-residue polypeptide: Protein nucleotidyltransferase YdiU (484 aa).

ATP is bound by residues glycine 81, glycine 83, arginine 84, lysine 103, aspartate 115, glycine 116, arginine 166, and arginine 173. Aspartate 244 acts as the Proton acceptor in catalysis. Positions 245 and 254 each coordinate Mg(2+). Aspartate 254 contacts ATP.

Belongs to the SELO family. It depends on Mg(2+) as a cofactor. Mn(2+) is required as a cofactor.

It catalyses the reaction L-seryl-[protein] + ATP = 3-O-(5'-adenylyl)-L-seryl-[protein] + diphosphate. The enzyme catalyses L-threonyl-[protein] + ATP = 3-O-(5'-adenylyl)-L-threonyl-[protein] + diphosphate. The catalysed reaction is L-tyrosyl-[protein] + ATP = O-(5'-adenylyl)-L-tyrosyl-[protein] + diphosphate. It carries out the reaction L-histidyl-[protein] + UTP = N(tele)-(5'-uridylyl)-L-histidyl-[protein] + diphosphate. It catalyses the reaction L-seryl-[protein] + UTP = O-(5'-uridylyl)-L-seryl-[protein] + diphosphate. The enzyme catalyses L-tyrosyl-[protein] + UTP = O-(5'-uridylyl)-L-tyrosyl-[protein] + diphosphate. Its function is as follows. Nucleotidyltransferase involved in the post-translational modification of proteins. It can catalyze the addition of adenosine monophosphate (AMP) or uridine monophosphate (UMP) to a protein, resulting in modifications known as AMPylation and UMPylation. The polypeptide is Protein nucleotidyltransferase YdiU (Shewanella baltica (strain OS223)).